The chain runs to 130 residues: MLKTLPPTLREKKRYVALEIIFEEELFQKDVIAIVRNALMNYSGVLGCSRTNPWLIDYNHPYGILRISREEVNNLRSSLSLTNEHRKKPINIHIIGISNSVKHVREKFLHVPHEPYYKVIQKLKKKGPKK.

Belongs to the eukaryotic/archaeal RNase P protein component 2 family. In terms of assembly, consists of a catalytic RNA component and at least 4-5 protein subunits.

It localises to the cytoplasm. It catalyses the reaction Endonucleolytic cleavage of RNA, removing 5'-extranucleotides from tRNA precursor.. Its function is as follows. Part of ribonuclease P, a protein complex that generates mature tRNA molecules by cleaving their 5'-ends. The chain is Ribonuclease P protein component 2 from Methanococcus maripaludis (strain C5 / ATCC BAA-1333).